Here is a 287-residue protein sequence, read N- to C-terminus: Pantothenate synthetase (287 aa).

30 to 37 contacts ATP; the sequence is MGNLHSGH. H37 acts as the Proton donor in catalysis. Q61 contributes to the (R)-pantoate binding site. Q61 is a binding site for beta-alanine. 149-152 contacts ATP; sequence GEKD. Q155 contributes to the (R)-pantoate binding site. ATP contacts are provided by residues V178 and 186 to 189; that span reads LSSR.

The protein belongs to the pantothenate synthetase family. As to quaternary structure, homodimer.

The protein localises to the cytoplasm. The catalysed reaction is (R)-pantoate + beta-alanine + ATP = (R)-pantothenate + AMP + diphosphate + H(+). Its pathway is cofactor biosynthesis; (R)-pantothenate biosynthesis; (R)-pantothenate from (R)-pantoate and beta-alanine: step 1/1. In terms of biological role, catalyzes the condensation of pantoate with beta-alanine in an ATP-dependent reaction via a pantoyl-adenylate intermediate. The chain is Pantothenate synthetase from Pseudomonas putida (strain W619).